A 635-amino-acid polypeptide reads, in one-letter code: Threonine--tRNA ligase (635 aa).

Positions 1–61 (MIAITLPDGS…EQNVDLAIVT (61 aa)) constitute a TGS domain. The catalytic stretch occupies residues 242–533 (DHRKLGKLLD…LLENHAGALP (292 aa)). 3 residues coordinate Zn(2+): cysteine 333, histidine 384, and histidine 510.

The protein belongs to the class-II aminoacyl-tRNA synthetase family. Homodimer. Requires Zn(2+) as cofactor.

Its subcellular location is the cytoplasm. The enzyme catalyses tRNA(Thr) + L-threonine + ATP = L-threonyl-tRNA(Thr) + AMP + diphosphate + H(+). In terms of biological role, catalyzes the attachment of threonine to tRNA(Thr) in a two-step reaction: L-threonine is first activated by ATP to form Thr-AMP and then transferred to the acceptor end of tRNA(Thr). Also edits incorrectly charged L-seryl-tRNA(Thr). In Ralstonia nicotianae (strain ATCC BAA-1114 / GMI1000) (Ralstonia solanacearum), this protein is Threonine--tRNA ligase.